Here is a 427-residue protein sequence, read N- to C-terminus: Cysteate synthase (427 aa).

K104 is modified (N6-(pyridoxal phosphate)lysine). Pyridoxal 5'-phosphate is bound by residues N130 and T382.

The protein belongs to the threonine synthase family. Cysteate synthase subfamily. In terms of assembly, homotrimer. Requires pyridoxal 5'-phosphate as cofactor.

It catalyses the reaction O-phospho-L-serine + sulfite + H(+) = L-cysteate + phosphate. Its pathway is cofactor biosynthesis; coenzyme M biosynthesis. In terms of biological role, specifically catalyzes the beta-elimination of phosphate from L-phosphoserine and the beta-addition of sulfite to the dehydroalanine intermediate to produce L-cysteate. The chain is Cysteate synthase from Methanocella paludicola (strain DSM 17711 / JCM 13418 / NBRC 101707 / SANAE).